The sequence spans 278 residues: HTH-type transcriptional activator RhaS (278 aa).

One can recognise an HTH araC/xylS-type domain in the interval 174-272 (NQLMAWLEEH…NWSPRDIRQG (99 aa)). 2 consecutive DNA-binding regions (H-T-H motif) follow at residues 191–212 (EAVA…KQHT) and 239–262 (VTEI…RREF).

Binds DNA as a dimer.

The protein localises to the cytoplasm. Functionally, activates expression of the rhaBAD and rhaT operons. This Salmonella schwarzengrund (strain CVM19633) protein is HTH-type transcriptional activator RhaS.